We begin with the raw amino-acid sequence, 469 residues long: Pancreatic lipase-related protein 2 (469 aa).

The N-terminal stretch at 1–17 is a signal peptide; it reads MLPPWTLGLLLLATVRG. A disulfide bridge connects residues Cys21 and Cys27. The interval 93 to 105 is required for galactolipase activity; the sequence is IHGFLDKAEDSWP. A disulfide bond links Cys109 and Cys120. The active-site Nucleophile is the Ser171. Residue Asp195 is the Charge relay system of the active site. Ca(2+) contacts are provided by Glu206, Arg209, Asp211, and Asp214. A disulfide bond links Cys256 and Cys280. The segment at 257–279 is required for galactolipase activity; it reads KKNVLSTITDIDGIWEGIGGFVS. His282 functions as the Charge relay system in the catalytic mechanism. 2 disulfide bridges follow: Cys304/Cys315 and Cys318/Cys323. N-linked (GlcNAc...) asparagine glycans are attached at residues Asn353 and Asn428. The 113-residue stretch at 357–469 folds into the PLAT domain; the sequence is WRYKISVTLS…ENVLQSLYPC (113 aa). Residues Cys453 and Cys469 are joined by a disulfide bond.

The protein belongs to the AB hydrolase superfamily. Lipase family. Pancreas.

It is found in the secreted. The protein localises to the zymogen granule membrane. It localises to the cell projection. Its subcellular location is the neuron projection. The catalysed reaction is a triacylglycerol + H2O = a diacylglycerol + a fatty acid + H(+). It carries out the reaction a 1,2-diacyl-3-O-(beta-D-galactosyl)-sn-glycerol + 2 H2O = 3-beta-D-galactosyl-sn-glycerol + 2 a fatty acid + 2 H(+). The enzyme catalyses 1,2,3-tri-(9Z-octadecenoyl)-glycerol + H2O = di-(9Z)-octadecenoylglycerol + (9Z)-octadecenoate + H(+). It catalyses the reaction di-(9Z)-octadecenoylglycerol + H2O = (9Z-octadecenoyl)-glycerol + (9Z)-octadecenoate + H(+). The catalysed reaction is (9Z-octadecenoyl)-glycerol + H2O = glycerol + (9Z)-octadecenoate + H(+). It carries out the reaction 1-(9Z-octadecenoyl)-glycerol + H2O = glycerol + (9Z)-octadecenoate + H(+). The enzyme catalyses 1,2,3-tripropanoylglycerol + H2O = dipropanoylglycerol + propanoate + H(+). It catalyses the reaction 1,2,3-tributanoylglycerol + H2O = dibutanoylglycerol + butanoate + H(+). The catalysed reaction is 1,2,3-trioctanoylglycerol + H2O = dioctanoylglycerol + octanoate + H(+). It carries out the reaction 1,2-didecanoylglycerol + H2O = decanoylglycerol + decanoate + H(+). The enzyme catalyses long chain 1,2-diacyl-3-O-beta-D-galactosyl-sn-glycerol + H2O = long chain acyl-3-O-beta-D-galactosyl-sn-glycerol + a fatty acid + H(+). It catalyses the reaction 1,2-dioctanoyl-3-O-beta-D-galactosyl-sn-glycerol + H2O = octanoyl-3-(beta-D-galactosyl)-sn-glycerol + octanoate + H(+). The catalysed reaction is 1,2-didodecanoyl-3-beta-D-galactosyl-sn-glycerol + H2O = dodecanoyl-3-beta-D-galactosyl-sn-glycerol + dodecanoate + H(+). It carries out the reaction 1-beta-D-galactosyl-2,3-didodecanoyl-sn-glycerol + H2O = 1-beta-D-galactosyl-dodecanoyl-sn-glycerol + dodecanoate + H(+). The enzyme catalyses a 1,2-diacyl-3-O-[alpha-D-galactosyl-(1-&gt;6)-beta-D-galactosyl]-sn-glycerol + H2O = acyl-3-O-[alpha-D-galactosyl-(1-&gt;6)-beta-D-galactosyl]-sn-glycerol + a fatty acid + H(+). It catalyses the reaction long chain 1,2-diacyl-3-O-[alpha-D-galactosyl-(1-&gt;6)-beta-D-galactosyl]-sn-glycerol + H2O = long chain acyl-3-O-[alpha-D-galactosyl-(1-&gt;6)-beta-D-galactosyl]-sn-glycerol + a fatty acid + H(+). The catalysed reaction is 1,2-dioctanoyl-3-O-[alpha-D-galactosyl-(1-&gt;6)-beta-D-galactosyl]-sn-glycerol + H2O = octanoyl-3-O-[alpha-D-galactosyl-(1-&gt;6)-beta-D-galactosyl]-sn-glycerol + octanoate + H(+). It carries out the reaction 1,2-didodecanoyl-3-O-[alpha-D-galactosyl-(1-&gt;6)-beta-D-galactosyl]-sn-glycerol + H2O = dodecanoyl-3-O-[alpha-D-galactosyl-(1-&gt;6)-beta-D-galactosyl]-sn-glycerol + dodecanoate + H(+). The enzyme catalyses a 1,2-diacyl-sn-glycero-3-phosphocholine + H2O = a monoacyl-sn-glycero-3-phosphocholine + a fatty acid + H(+). It participates in glycerolipid metabolism; triacylglycerol degradation. The protein operates within glycolipid metabolism. Regulated by CLPS and bile salts levels ranging 1-5 mM in neonates and 2-30 mM in healthy adults. CLPS stimulates milk fat digestion in the presence of 4 mM bile salts. Triacylglycerol lipase activity toward short- and medium-chain triglycerides is inhibited by increasing concentrations of bile salts and weakly reactivated by CLPS. Optimal triacylglycerol lipase activity is reached at bile salts concentrations ranging from 0.1 to 0.5 mM and then decreases at concentrations higher than 1 mM. Lipase activity toward long-chain glycerolipids is stimulated by CLPS in the presence of 4 mM bile salts. Galactolipase activity is inhibited at high concentrations of bile salts. Triacylglycerol lipase activity is inhibited by anti-obesity drug tetrahydrolipstatin. Its function is as follows. Lipase that primarily hydrolyzes triglycerides and galactosylglycerides. In neonates, may play a major role in pancreatic digestion of dietary fats such as milk fat globules enriched in long-chain triglycerides. Hydrolyzes short-, medium- and long-chain fatty acyls in triglycerides without apparent positional specificity. Can completely deacylate triacylglycerols. When the liver matures and bile salt synthesis increases, likely functions mainly as a galactolipase and monoacylglycerol lipase. Hydrolyzes monogalactosyldiglycerols (MGDG) and digalactosyldiacylglycerols (DGDG) present in a plant-based diet, releasing long-chain polyunsaturated fatty acids. Hydrolyzes medium- and long-chain fatty acyls in galactolipids. May act together with LIPF to hydrolyze partially digested triglycerides. Hydrolyzes long-chain monoglycerides with high efficiency. In cytotoxic T cells, contributes to perforin-dependent cell lysis, but is unlikely to mediate direct cytotoxicity. Also has low phospholipase activity. In neurons, required for the localization of the phospholipid 1-oleoyl-2-palmitoyl-PC (OPPC) to neurite tips through acyl chain remodeling of membrane phospholipids. The resulting OPPC-rich lipid membrane domain recruits the t-SNARE protein STX4 by selectively interacting with the STX4 transmembrane domain and this promotes surface expression of the dopamine transporter SLC6A3/DAT at neurite tips by facilitating fusion of SLC6A3-containing transport vesicles with the plasma membrane. This chain is Pancreatic lipase-related protein 2, found in Homo sapiens (Human).